The primary structure comprises 185 residues: Intraflagellar transport protein 22 homolog (185 aa).

Residues 10 to 17, 63 to 67, and 123 to 126 each bind GTP; these read GPCESGKT, DCGGD, and HKPG. The residue at position 137 (S137) is a Phosphoserine.

It belongs to the small GTPase superfamily. Rab family. In terms of assembly, component of the IFT complex B, at least composed of IFT20, IFT22, IFT25, IFT27, IFT46, IFT52, TRAF3IP1/IFT54, IFT57, IFT74, IFT80, IFT81, and IFT88. Interacts with IFT88. Interacts with CFAP61.

It is found in the cell projection. Its subcellular location is the cilium. In terms of biological role, small GTPase-like component of the intraflagellar transport (IFT) complex B. This chain is Intraflagellar transport protein 22 homolog (IFT22), found in Macaca fascicularis (Crab-eating macaque).